Here is a 553-residue protein sequence, read N- to C-terminus: Glycerol kinase 2 (553 aa).

T20 is a substrate binding site. ATP is bound at residue R24. The substrate site is built by R94, Y148, and D259. ATP contacts are provided by residues T281, G326, and G427–N431. A helical membrane pass occupies residues I526–A546.

Belongs to the FGGY kinase family. Interacts with ARMC12 and PLD6.

The protein resides in the mitochondrion outer membrane. Its subcellular location is the cytoplasm. The catalysed reaction is glycerol + ATP = sn-glycerol 3-phosphate + ADP + H(+). The protein operates within polyol metabolism; glycerol degradation via glycerol kinase pathway; sn-glycerol 3-phosphate from glycerol: step 1/1. Its function is as follows. Key enzyme in the regulation of glycerol uptake and metabolism. Essential for male fertility and sperm mitochondrial sheath formation. Required for proper arrangement of crescent-like mitochondria to form the mitochondrial sheath during spermatogenesis. Can induce mitochondrial clustering through interactions with PLD6 and up-regulation of phosphatidic acid synthesis in the mitochondria. The polypeptide is Glycerol kinase 2 (GK2) (Macaca fascicularis (Crab-eating macaque)).